A 90-amino-acid polypeptide reads, in one-letter code: Molybdopterin synthase sulfur carrier subunit (90 aa).

Glycine 90 carries the post-translational modification 1-thioglycine; alternate. Glycine 90 carries the post-translational modification Glycyl adenylate; alternate.

It belongs to the MoaD family. MOCS2A subfamily. In terms of assembly, heterotetramer; composed of 2 small (Mocs2A) and 2 large (Mocs2B) subunits. Post-translationally, C-terminal thiocarboxylation occurs in 2 steps, it is first acyl-adenylated (-COAMP) via the hesA/moeB/thiF part of MOCS3, then thiocarboxylated (-COSH) via the rhodanese domain of MOCS3.

The protein localises to the cytoplasm. It participates in cofactor biosynthesis; molybdopterin biosynthesis. Acts as a sulfur carrier required for molybdopterin biosynthesis. Component of the molybdopterin synthase complex that catalyzes the conversion of precursor Z into molybdopterin by mediating the incorporation of 2 sulfur atoms into precursor Z to generate a dithiolene group. In the complex, serves as sulfur donor by being thiocarboxylated (-COSH) at its C-terminus by MOCS3. After interaction with Mocs2B, the sulfur is then transferred to precursor Z to form molybdopterin. This Drosophila yakuba (Fruit fly) protein is Molybdopterin synthase sulfur carrier subunit.